The sequence spans 341 residues: L-threonine 3-dehydrogenase (341 aa).

Cysteine 38 is a binding site for Zn(2+). Residues threonine 40 and histidine 43 each act as charge relay system in the active site. Zn(2+)-binding residues include histidine 63, glutamate 64, cysteine 93, cysteine 96, cysteine 99, and cysteine 107. NAD(+) contacts are provided by residues isoleucine 175, aspartate 195, arginine 200, 262–264 (LGI), and 286–287 (IY).

This sequence belongs to the zinc-containing alcohol dehydrogenase family. In terms of assembly, homotetramer. The cofactor is Zn(2+).

It is found in the cytoplasm. It catalyses the reaction L-threonine + NAD(+) = (2S)-2-amino-3-oxobutanoate + NADH + H(+). Its pathway is amino-acid degradation; L-threonine degradation via oxydo-reductase pathway; glycine from L-threonine: step 1/2. Catalyzes the NAD(+)-dependent oxidation of L-threonine to 2-amino-3-ketobutyrate. The polypeptide is L-threonine 3-dehydrogenase (Klebsiella pneumoniae (strain 342)).